A 265-amino-acid polypeptide reads, in one-letter code: Mlc titration factor A (265 aa).

Zn(2+) is bound by residues His-111, His-148, His-152, and Glu-211.

It belongs to the MtfA family. Interacts with Mlc. It depends on Zn(2+) as a cofactor.

It localises to the cytoplasm. Its function is as follows. Involved in the modulation of the activity of the glucose-phosphotransferase system (glucose-PTS). Interacts with the transcriptional repressor Mlc, preventing its interaction with DNA and leading to the modulation of expression of genes regulated by Mlc, including ptsG, which encodes the PTS system glucose-specific EIICB component. Shows zinc-dependent metallopeptidase activity. This is Mlc titration factor A from Cronobacter sakazakii (strain ATCC BAA-894) (Enterobacter sakazakii).